The chain runs to 1050 residues: Sentrin-specific protease 7 (1050 aa).

Disordered stretches follow at residues 1 to 28 (MDKR…SSDL), 183 to 288 (PPVT…DVKY), and 304 to 365 (RRLR…KSDF). Phosphoserine occurs at positions 11, 12, 13, and 25. The segment covering 196 to 211 (LQSEQLSSSSDGSLES) has biased composition (low complexity). The segment covering 259-271 (ISDTQPEDLNSGS) has biased composition (polar residues). Over residues 273 to 288 (GCDHLEQESRNKDVKY) the composition is skewed to basic and acidic residues. Positions 310–320 (LPDSQYCTSLD) are enriched in polar residues. Composition is skewed to basic and acidic residues over residues 321–331 (KSTEQTKKQED) and 338–365 (EFEK…KSDF). S373, S433, S443, and S444 each carry phosphoserine. The interval 443–476 (SSDEEGPVEHKSSEILKLQSKQDRETTNENESTS) is disordered. The span at 449 to 469 (PVEHKSSEILKLQSKQDRETT) shows a compositional bias: basic and acidic residues. The tract at residues 760–1050 (LGVTNEDLEC…HLQQQKGSSS (291 aa)) is protease. Active-site residues include H860 and D939. The active-site Nucleophile is the C992.

Belongs to the peptidase C48 family.

The protein localises to the cytoplasm. Its function is as follows. Protease that acts as a positive regulator of the cGAS-STING pathway by catalyzing desumoylation of CGAS. Desumoylation of CGAS promotes DNA-binding activity of CGAS, subsequent oligomerization and activation. Deconjugates SUMO2 and SUMO3 from targeted proteins, but not SUMO1. Catalyzes the deconjugation of poly-SUMO2 and poly-SUMO3 chains. Has very low efficiency in processing full-length SUMO proteins to their mature forms. In Homo sapiens (Human), this protein is Sentrin-specific protease 7.